We begin with the raw amino-acid sequence, 377 residues long: Nitric oxide reductase FlRd-NAD(+) reductase (377 aa).

This sequence belongs to the FAD-dependent oxidoreductase family. Requires FAD as cofactor.

It is found in the cytoplasm. It carries out the reaction 2 reduced [nitric oxide reductase rubredoxin domain] + NAD(+) + H(+) = 2 oxidized [nitric oxide reductase rubredoxin domain] + NADH. It functions in the pathway nitrogen metabolism; nitric oxide reduction. In terms of biological role, one of at least two accessory proteins for anaerobic nitric oxide (NO) reductase. Reduces the rubredoxin moiety of NO reductase. This Escherichia coli (strain SMS-3-5 / SECEC) protein is Nitric oxide reductase FlRd-NAD(+) reductase.